Here is a 984-residue protein sequence, read N- to C-terminus: Ephrin type-B receptor 1 (984 aa).

The signal sequence occupies residues 1–17 (MALDCLLLFLLASAVAA). The Extracellular portion of the chain corresponds to 18–540 (MEETLMDTRT…YKSELREQLP (523 aa)). The Eph LBD domain occupies 19 to 201 (EETLMDTRTA…FFKKCPSIVQ (183 aa)). 2 Fibronectin type-III domains span residues 322 to 432 (VPSG…TNQA) and 433 to 528 (APST…TLTD). N-linked (GlcNAc...) asparagine glycosylation is found at Asn-334, Asn-426, and Asn-480. Residues 541 to 563 (LIAGSAAAGVVFVVSLVAISIVC) traverse the membrane as a helical segment. Topologically, residues 564 to 984 (SRKRAYSKEA…QMNQSPSVMA (421 aa)) are cytoplasmic. At Tyr-600 the chain carries Phosphotyrosine. The 264-residue stretch at 619 to 882 (VKIEEVIGAG…EIVNTLDKMI (264 aa)) folds into the Protein kinase domain. Residues 625–633 (IGAGEFGEV) and Lys-651 each bind ATP. The Proton acceptor role is filled by Asp-744. In terms of domain architecture, SAM spans 911-975 (TAFTTVDDWL…LSSIHSMRVQ (65 aa)). The residue at position 928 (Tyr-928) is a Phosphotyrosine; by autocatalysis. The short motif at 982-984 (VMA) is the PDZ-binding element.

This sequence belongs to the protein kinase superfamily. Tyr protein kinase family. Ephrin receptor subfamily. Heterotetramer upon binding of the ligand. The heterotetramer is composed of an ephrin dimer and a receptor dimer. Oligomerization is probably required to induce biological responses. Interacts with EPHB6; transphosphorylates EPHB6 to form an active signaling complex. Interacts with PICK1. Interacts (through Tyr-594) with NCK1 (via SH2 domain); activates the JUN cascade to regulate cell adhesion. The ligand-activated form interacts (through Tyr-928) with GRB7 and GRB10 (via SH2 domains). The ligand-activated form interacts (residues within the catalytic domain) with GRB2 (via SH2 domain). Interacts with GRB2, SHC1 and SRC; activates the MAPK/ERK cascade to regulate cell migration. Interacts with CBL; regulates receptor degradation through ubiquitination. Interacts with ACP1. Phosphorylated. Autophosphorylation is stimulated by the ligand EFNB1. Required for interaction with SH2 domain-containing interactors, for activation of the MAPK/ERK and JUN signaling cascades and for ubiquitination by CBL. Post-translationally, ubiquitinated; (EFNB1)ligand-induced poly- and/or multi-ubiquitination by CBL is regulated by SRC and leads to lysosomal degradation. As to expression, expressed in neural stem and progenitor cells in the dentate gyrus. Expressed in myogenic progenitor cells.

Its subcellular location is the cell membrane. The protein localises to the early endosome membrane. The protein resides in the cell projection. It is found in the dendrite. It carries out the reaction L-tyrosyl-[protein] + ATP = O-phospho-L-tyrosyl-[protein] + ADP + H(+). Its function is as follows. Receptor tyrosine kinase which binds promiscuously transmembrane ephrin-B family ligands residing on adjacent cells, leading to contact-dependent bidirectional signaling into neighboring cells. The signaling pathway downstream of the receptor is referred to as forward signaling while the signaling pathway downstream of the ephrin ligand is referred to as reverse signaling. Cognate/functional ephrin ligands for this receptor include EFNB1, EFNB2 and EFNB3. During nervous system development, regulates retinal axon guidance redirecting ipsilaterally ventrotemporal retinal ganglion cells axons at the optic chiasm midline. This probably requires repulsive interaction with EFNB2. In the adult nervous system together with EFNB3, regulates chemotaxis, proliferation and polarity of the hippocampus neural progenitors. In addition to its role in axon guidance also plays an important redundant role with other ephrin-B receptors in development and maturation of dendritic spines and synapse formation. May also regulate angiogenesis. More generally, may play a role in targeted cell migration and adhesion. Upon activation by EFNB1 and probably other ephrin-B ligands activates the MAPK/ERK and the JNK signaling cascades to regulate cell migration and adhesion respectively. Involved in the maintenance of the pool of satellite cells (muscle stem cells) by promoting their self-renewal and reducing their activation and differentiation. In Mus musculus (Mouse), this protein is Ephrin type-B receptor 1 (Ephb1).